The following is a 170-amino-acid chain: MTRYDDLPYRTCVGMMLINERGLVFVGRRAGVEQVDDSYVWQMPQGGVDPGEDTWLAAKRELYEETSVRSIEKLAEIPDWLTYDIPRVVAGRAWKGRYRGQRQKWYAVRFIGEDNEINIANPGDGHKPEFTAWRWEPMQNLTGLIIPFKRPVYERVVKEFASLAGAQAGT.

The 151-residue stretch at 8-158 folds into the Nudix hydrolase domain; it reads PYRTCVGMML…KRPVYERVVK (151 aa). The short motif at 46–67 is the Nudix box element; sequence GGVDPGEDTWLAAKRELYEETS.

Belongs to the Nudix hydrolase family. RppH subfamily. It depends on a divalent metal cation as a cofactor.

In terms of biological role, accelerates the degradation of transcripts by removing pyrophosphate from the 5'-end of triphosphorylated RNA, leading to a more labile monophosphorylated state that can stimulate subsequent ribonuclease cleavage. The protein is RNA pyrophosphohydrolase of Nitrobacter winogradskyi (strain ATCC 25391 / DSM 10237 / CIP 104748 / NCIMB 11846 / Nb-255).